The primary structure comprises 337 residues: DNA-directed RNA polymerase subunit alpha (337 aa).

The alpha N-terminal domain (alpha-NTD) stretch occupies residues 1-233 (MVREKVTVST…DLFIPFLHME (233 aa)). Positions 264 to 337 (NKKIALKSIF…FVIDLAKNKF (74 aa)) are alpha C-terminal domain (alpha-CTD).

The protein belongs to the RNA polymerase alpha chain family. In plastids the minimal PEP RNA polymerase catalytic core is composed of four subunits: alpha, beta, beta', and beta''. When a (nuclear-encoded) sigma factor is associated with the core the holoenzyme is formed, which can initiate transcription.

It is found in the plastid. The protein resides in the chloroplast. It catalyses the reaction RNA(n) + a ribonucleoside 5'-triphosphate = RNA(n+1) + diphosphate. In terms of biological role, DNA-dependent RNA polymerase catalyzes the transcription of DNA into RNA using the four ribonucleoside triphosphates as substrates. This is DNA-directed RNA polymerase subunit alpha from Atropa belladonna (Belladonna).